A 364-amino-acid chain; its full sequence is Aminomethyltransferase (364 aa).

The protein belongs to the GcvT family. In terms of assembly, the glycine cleavage system is composed of four proteins: P, T, L and H.

It carries out the reaction N(6)-[(R)-S(8)-aminomethyldihydrolipoyl]-L-lysyl-[protein] + (6S)-5,6,7,8-tetrahydrofolate = N(6)-[(R)-dihydrolipoyl]-L-lysyl-[protein] + (6R)-5,10-methylene-5,6,7,8-tetrahydrofolate + NH4(+). In terms of biological role, the glycine cleavage system catalyzes the degradation of glycine. This chain is Aminomethyltransferase, found in Shewanella sp. (strain MR-4).